A 413-amino-acid polypeptide reads, in one-letter code: Queuine tRNA-ribosyltransferase accessory subunit 2 (413 aa).

The segment at 298-321 (LEKSETSGAERNGDVGAESEEPDA) is disordered. C349, C351, C354, and H380 together coordinate Zn(2+).

The protein belongs to the queuine tRNA-ribosyltransferase family. QTRT2 subfamily. As to quaternary structure, heterodimer of a catalytic subunit qtrt1 and an accessory subunit qtrt2. Zn(2+) is required as a cofactor.

Its subcellular location is the cytoplasm. The protein resides in the mitochondrion outer membrane. Functionally, non-catalytic subunit of the queuine tRNA-ribosyltransferase (TGT) that catalyzes the base-exchange of a guanine (G) residue with queuine (Q) at position 34 (anticodon wobble position) in tRNAs with GU(N) anticodons (tRNA-Asp, -Asn, -His and -Tyr), resulting in the hypermodified nucleoside queuosine (7-(((4,5-cis-dihydroxy-2-cyclopenten-1-yl)amino)methyl)-7-deazaguanosine). The protein is Queuine tRNA-ribosyltransferase accessory subunit 2 of Xenopus tropicalis (Western clawed frog).